Reading from the N-terminus, the 215-residue chain is Cytochrome c biogenesis ATP-binding export protein CcmA (215 aa).

Residues 7–209 (LKIDRLACQR…ALTVLNLAQY (203 aa)) form the ABC transporter domain. An ATP-binding site is contributed by 39–46 (GHNGIGKT).

This sequence belongs to the ABC transporter superfamily. CcmA exporter (TC 3.A.1.107) family. In terms of assembly, the complex is composed of two ATP-binding proteins (CcmA) and two transmembrane proteins (CcmB).

It localises to the cell inner membrane. The catalysed reaction is heme b(in) + ATP + H2O = heme b(out) + ADP + phosphate + H(+). Part of the ABC transporter complex CcmAB involved in the biogenesis of c-type cytochromes; once thought to export heme, this seems not to be the case, but its exact role is uncertain. Responsible for energy coupling to the transport system. This is Cytochrome c biogenesis ATP-binding export protein CcmA from Mannheimia succiniciproducens (strain KCTC 0769BP / MBEL55E).